The sequence spans 71 residues: cAMP-dependent protein kinase inhibitor beta (71 aa).

The disordered stretch occupies residues 1–21 (MTDVESVISSFASSARAGRRN). Thr2 carries the blocked amino end (Thr) modification. The residue at position 35 (Ser35) is a Phosphoserine. The tract at residues 51–71 (AKMKNEEKDQGQPKKPLDEDK) is disordered.

This sequence belongs to the PKI family. As to expression, testis.

Extremely potent competitive inhibitor of cAMP-dependent protein kinase activity, this protein interacts with the catalytic subunit of the enzyme after the cAMP-induced dissociation of its regulatory chains. The sequence is that of cAMP-dependent protein kinase inhibitor beta (Pkib) from Rattus norvegicus (Rat).